Here is a 413-residue protein sequence, read N- to C-terminus: Argininosuccinate synthase (413 aa).

8–16 is an ATP binding site; it reads AYSGGLDTS. Tyrosine 87 lines the L-citrulline pocket. ATP is bound at residue glycine 117. Positions 119, 123, and 124 each coordinate L-aspartate. Asparagine 123 serves as a coordination point for L-citrulline. L-citrulline-binding residues include arginine 127, serine 175, glutamate 259, and tyrosine 271.

This sequence belongs to the argininosuccinate synthase family. Type 1 subfamily. Homotetramer.

It localises to the cytoplasm. The catalysed reaction is L-citrulline + L-aspartate + ATP = 2-(N(omega)-L-arginino)succinate + AMP + diphosphate + H(+). Its pathway is amino-acid biosynthesis; L-arginine biosynthesis; L-arginine from L-ornithine and carbamoyl phosphate: step 2/3. In Micrococcus luteus (strain ATCC 4698 / DSM 20030 / JCM 1464 / CCM 169 / CCUG 5858 / IAM 1056 / NBRC 3333 / NCIMB 9278 / NCTC 2665 / VKM Ac-2230) (Micrococcus lysodeikticus), this protein is Argininosuccinate synthase.